Here is a 382-residue protein sequence, read N- to C-terminus: Serine/threonine-protein kinase US3 homolog (382 aa).

The segment covering 1 to 10 (MENKQCDHLT) has biased composition (basic and acidic residues). The tract at residues 1-75 (MENKQCDHLT…ASESDEDDDD (75 aa)) is disordered. Positions 12-24 (WFSTTSDASESMD) are enriched in polar residues. The span at 45-75 (ADEDLYSDISEGDLEYSDCDSASESDEDDDD) shows a compositional bias: acidic residues. The Protein kinase domain maps to 93 to 379 (YTVIKTLTPG…AEELLSYPMF (287 aa)). ATP-binding positions include 99–107 (LTPGSEGRV) and Lys-122. Asp-207 functions as the Proton acceptor in the catalytic mechanism.

Belongs to the protein kinase superfamily. Ser/Thr protein kinase family. In terms of processing, phosphorylated by protein 49; this phosphorylation regulates subsequent phosphorylation of proteins 26 and 29 by US3 homolog. Autophosphorylated.

The protein resides in the host cytoplasm. The protein localises to the host nucleus. It carries out the reaction L-seryl-[protein] + ATP = O-phospho-L-seryl-[protein] + ADP + H(+). It catalyses the reaction L-threonyl-[protein] + ATP = O-phospho-L-threonyl-[protein] + ADP + H(+). Its function is as follows. Multifunctional serine/threonine kinase that plays a role in several processes including egress of virus particles from the nucleus, modulation of the actin cytoskeleton and inhibition of apoptosis. Phosphorylates protein 26 and 29, two critical regulators of capsid budding from nucleus to endoplasmic reticulum, thereby facilitating virion egress. Modulates and redistributes host components of the nuclear envelope, including LMNA, emerin/EMD and the nuclear matrix protein MATR3. Phosphorylates envelope glycoprotein B (gB), probably to direct it to the cell surface. Promotes virus intracellular spread by restructuring host cell cytoskeleton. Blocks host apoptosis to extend cell survival and allow efficient viral replication. Promotes viral gene expression by phosphorylating host HDAC2 to reduce viral genome silencing. The polypeptide is Serine/threonine-protein kinase US3 homolog (Equine herpesvirus 1 (strain Ab4p) (EHV-1)).